A 681-amino-acid polypeptide reads, in one-letter code: Envelope glycoprotein (681 aa).

Positions 1–18 (MKTTCLLISLILIQGVKT) are cleaved as a signal peptide. At 19-648 (LPILEIASNI…GLGGKWWTSD (630 aa)) the chain is on the extracellular side. A receptor-binding region spans residues 38–188 (SGTLQKTEDV…FSRQGQGYRH (151 aa)). Residues asparagine 94, asparagine 171, asparagine 190, asparagine 202, asparagine 207, asparagine 219, asparagine 223, and asparagine 255 are each glycosylated (N-linked (GlcNAc...) asparagine; by host). Residues 222 to 424 (KNQTCAPSKK…TSPSPTPNST (203 aa)) are disordered. Polar residues-rich tracts occupy residues 244–259 (LTST…TTDP), 278–290 (PYTT…KQGL), and 308–331 (GGNN…TAQP). Residues 277 to 455 (EPYTTSDAAT…PFLDGLINAP (179 aa)) are mucin-like region. Asparagine 310, asparagine 313, asparagine 326, asparagine 337, asparagine 344, asparagine 345, asparagine 350, asparagine 360, asparagine 397, asparagine 408, asparagine 422, and asparagine 487 each carry an N-linked (GlcNAc...) asparagine; by host glycan. Residues 337–347 (NTTTISTNNTS) show a composition bias toward low complexity. Positions 348-388 (KHNLSTPSVPIQNATNYNTQSTAPENEQTSAPSKTTLLPTE) are enriched in polar residues. Over residues 389 to 424 (NPTTAKSTNSTKSPTTTVPNTTNKYSTSPSPTPNST) the composition is skewed to low complexity. Residues 529–549 (GLSWIPFFGPGIEGLYTAGLI) are fusion peptide. Asparagine 564 and asparagine 619 each carry an N-linked (GlcNAc...) asparagine; by host glycan. Residues 649–669 (WGVLTNLGILLLLSIAVLIAL) traverse the membrane as a helical segment. Topologically, residues 670-681 (SCICRIFTKYIG) are cytoplasmic. Residues cysteine 671 and cysteine 673 are each lipidated (S-palmitoyl cysteine; by host).

The protein belongs to the filoviruses glycoprotein family. In terms of assembly, homotrimer; each monomer consists of a GP1 and a GP2 subunit linked by disulfide bonds. The resulting peplomers (GP1,2) protrude from the virus surface as spikes. GP1,2 interacts with human CD209 and CLEC4M (collectively referred to as DC-SIGN(R)). Asialoglycoprotein receptor (ASGP-R) may be a liver-specific receptor for GP1,2. Members of the Tyro3 receptor tyrosine kinase family may be cell entry factors interacting with GP1,2. Post-translationally, N-glycosylated. O-glycosylated in the mucin-like region. In terms of processing, specific enzymatic cleavages in vivo yield mature proteins. The precursor is processed into GP1 and GP2 by host cell furin in the trans Golgi, and maybe by other host proteases, to yield the mature GP1 and GP2 proteins. The cleavage site corresponds to the furin optimal cleavage sequence [KR]-X-[KR]-R. Post-translationally, GP1 is phosphorylated on serine residues between residues 260 and 273.

The protein resides in the virion membrane. The protein localises to the host cell membrane. Functionally, GP1 is responsible for binding to the receptor(s) on target cells. Interacts with CD209/DC-SIGN and CLEC4M/DC-SIGNR which act as cofactors for virus entry into the host cell. Binding to CD209 and CLEC4M, which are respectively found on dendritic cells (DCs), and on endothelial cells of liver sinusoids and lymph node sinuses, facilitate infection of macrophages and endothelial cells. These interactions not only facilitate virus cell entry, but also allow capture of viral particles by DCs and subsequent transmission to susceptible cells without DCs infection (trans infection). Its function is as follows. GP2 acts as a class I viral fusion protein. Under the current model, the protein has at least 3 conformational states: pre-fusion native state, pre-hairpin intermediate state, and post-fusion hairpin state. During viral and target cell membrane fusion, the coiled coil regions (heptad repeats) assume a trimer-of-hairpins structure, positioning the fusion peptide in close proximity to the C-terminal region of the ectodomain. The formation of this structure appears to drive apposition and subsequent fusion of viral and target cell membranes. Responsible for penetration of the virus into the cell cytoplasm by mediating the fusion of the membrane of the endocytosed virus particle with the endosomal membrane. Low pH in endosomes induces an irreversible conformational change in GP2, releasing the fusion hydrophobic peptide. This is Envelope glycoprotein (GP) from Chlorocebus aethiops (Green monkey).